Here is a 314-residue protein sequence, read N- to C-terminus: tRNA dimethylallyltransferase 1 (314 aa).

8 to 15 (GPTGTGKS) provides a ligand contact to ATP. 10-15 (TGTGKS) is a substrate binding site.

It belongs to the IPP transferase family. Monomer. Requires Mg(2+) as cofactor.

The enzyme catalyses adenosine(37) in tRNA + dimethylallyl diphosphate = N(6)-dimethylallyladenosine(37) in tRNA + diphosphate. Its function is as follows. Catalyzes the transfer of a dimethylallyl group onto the adenine at position 37 in tRNAs that read codons beginning with uridine, leading to the formation of N6-(dimethylallyl)adenosine (i(6)A). The polypeptide is tRNA dimethylallyltransferase 1 (Mycobacterium marinum (strain ATCC BAA-535 / M)).